The primary structure comprises 374 residues: Glutamate 5-kinase (374 aa).

Position 16 (lysine 16) interacts with ATP. Residues serine 56, aspartate 143, and asparagine 155 each contribute to the substrate site. 175–176 (TD) is an ATP binding site. In terms of domain architecture, PUA spans 282–360 (RGRVVLDAGA…SEIEAVLGYV (79 aa)).

It belongs to the glutamate 5-kinase family.

The protein resides in the cytoplasm. The catalysed reaction is L-glutamate + ATP = L-glutamyl 5-phosphate + ADP. It participates in amino-acid biosynthesis; L-proline biosynthesis; L-glutamate 5-semialdehyde from L-glutamate: step 1/2. In terms of biological role, catalyzes the transfer of a phosphate group to glutamate to form L-glutamate 5-phosphate. The protein is Glutamate 5-kinase of Ralstonia pickettii (strain 12J).